The chain runs to 102 residues: FMRFamide-like neuropeptides 9 (102 aa).

The N-terminal stretch at 1–19 (MNQFYALFLVACIAAMANA) is a signal peptide. Positions 20-63 (YEEPDLDALAEFCGKESNRKYCDQIAQLATQHAIGINQEQVRME) are excised as a propeptide. Phenylalanine amide is present on F72. The propeptide occupies 75–90 (RSGYPLVIDDEEMRMD). Phenylalanine amide is present on F99.

It belongs to the FARP (FMRFamide related peptide) family. In terms of tissue distribution, each flp gene is expressed in a distinct set of neurons.

The protein localises to the secreted. FMRFamides and FMRFamide-like peptides are neuropeptides. Its function is as follows. KPSFVRF-amide: Has no effect on somatic body wall muscle, inhibits contraction of vaginal vera muscle, and inhibits the activity of the dissected pharyngeal myogenic muscle system. Acts as a ligand for the npr-22 receptor in vitro. In Caenorhabditis elegans, this protein is FMRFamide-like neuropeptides 9.